A 105-amino-acid polypeptide reads, in one-letter code: DNA-directed RNA polymerase subunit omega (105 aa).

This sequence belongs to the RNA polymerase subunit omega family. In terms of assembly, the RNAP catalytic core consists of 2 alpha, 1 beta, 1 beta' and 1 omega subunit. When a sigma factor is associated with the core the holoenzyme is formed, which can initiate transcription.

The catalysed reaction is RNA(n) + a ribonucleoside 5'-triphosphate = RNA(n+1) + diphosphate. Its function is as follows. Promotes RNA polymerase assembly. Latches the N- and C-terminal regions of the beta' subunit thereby facilitating its interaction with the beta and alpha subunits. The sequence is that of DNA-directed RNA polymerase subunit omega from Streptococcus uberis (strain ATCC BAA-854 / 0140J).